We begin with the raw amino-acid sequence, 491 residues long: Aspartyl/glutamyl-tRNA(Asn/Gln) amidotransferase subunit B (491 aa).

It belongs to the GatB/GatE family. GatB subfamily. In terms of assembly, heterotrimer of A, B and C subunits.

It catalyses the reaction L-glutamyl-tRNA(Gln) + L-glutamine + ATP + H2O = L-glutaminyl-tRNA(Gln) + L-glutamate + ADP + phosphate + H(+). The catalysed reaction is L-aspartyl-tRNA(Asn) + L-glutamine + ATP + H2O = L-asparaginyl-tRNA(Asn) + L-glutamate + ADP + phosphate + 2 H(+). Its function is as follows. Allows the formation of correctly charged Asn-tRNA(Asn) or Gln-tRNA(Gln) through the transamidation of misacylated Asp-tRNA(Asn) or Glu-tRNA(Gln) in organisms which lack either or both of asparaginyl-tRNA or glutaminyl-tRNA synthetases. The reaction takes place in the presence of glutamine and ATP through an activated phospho-Asp-tRNA(Asn) or phospho-Glu-tRNA(Gln). The chain is Aspartyl/glutamyl-tRNA(Asn/Gln) amidotransferase subunit B from Burkholderia lata (strain ATCC 17760 / DSM 23089 / LMG 22485 / NCIMB 9086 / R18194 / 383).